A 184-amino-acid polypeptide reads, in one-letter code: Ras-related protein RabN2 (184 aa).

3–10 (GDYRSGKT) contacts GTP. An Effector region motif is present at residues 25–32 (TNPSTFDY). GTP-binding positions include 50–54 (DTAGH) and 117–120 (TKSD).

This sequence belongs to the small GTPase superfamily. Rab family.

The sequence is that of Ras-related protein RabN2 (rabN2) from Dictyostelium discoideum (Social amoeba).